Here is a 173-residue protein sequence, read N- to C-terminus: 3-hydroxydecanoyl-[acyl-carrier-protein] dehydratase (173 aa).

Histidine 71 is an active-site residue.

The protein belongs to the thioester dehydratase family. FabA subfamily. In terms of assembly, homodimer.

Its subcellular location is the cytoplasm. It catalyses the reaction a (3R)-hydroxyacyl-[ACP] = a (2E)-enoyl-[ACP] + H2O. The enzyme catalyses (3R)-hydroxydecanoyl-[ACP] = (2E)-decenoyl-[ACP] + H2O. It carries out the reaction (2E)-decenoyl-[ACP] = (3Z)-decenoyl-[ACP]. Its pathway is lipid metabolism; fatty acid biosynthesis. Its function is as follows. Necessary for the introduction of cis unsaturation into fatty acids. Catalyzes the dehydration of (3R)-3-hydroxydecanoyl-ACP to E-(2)-decenoyl-ACP and then its isomerization to Z-(3)-decenoyl-ACP. Can catalyze the dehydratase reaction for beta-hydroxyacyl-ACPs with saturated chain lengths up to 16:0, being most active on intermediate chain length. This Baumannia cicadellinicola subsp. Homalodisca coagulata protein is 3-hydroxydecanoyl-[acyl-carrier-protein] dehydratase.